Reading from the N-terminus, the 245-residue chain is 5'-nucleotidase SurE (245 aa).

The a divalent metal cation site is built by D8, D9, S39, and N91.

It belongs to the SurE nucleotidase family. A divalent metal cation serves as cofactor.

The protein resides in the cytoplasm. It catalyses the reaction a ribonucleoside 5'-phosphate + H2O = a ribonucleoside + phosphate. Functionally, nucleotidase that shows phosphatase activity on nucleoside 5'-monophosphates. The sequence is that of 5'-nucleotidase SurE from Herminiimonas arsenicoxydans.